Reading from the N-terminus, the 358-residue chain is Uroporphyrinogen decarboxylase (358 aa).

Substrate contacts are provided by residues 29–33, aspartate 79, tyrosine 156, threonine 211, and histidine 329; that span reads RQAGR.

Belongs to the uroporphyrinogen decarboxylase family. In terms of assembly, homodimer.

The protein localises to the cytoplasm. It catalyses the reaction uroporphyrinogen III + 4 H(+) = coproporphyrinogen III + 4 CO2. It functions in the pathway porphyrin-containing compound metabolism; protoporphyrin-IX biosynthesis; coproporphyrinogen-III from 5-aminolevulinate: step 4/4. Functionally, catalyzes the decarboxylation of four acetate groups of uroporphyrinogen-III to yield coproporphyrinogen-III. This chain is Uroporphyrinogen decarboxylase, found in Idiomarina loihiensis (strain ATCC BAA-735 / DSM 15497 / L2-TR).